Here is a 448-residue protein sequence, read N- to C-terminus: UDP-N-acetylmuramoylalanine--D-glutamate ligase (448 aa).

Positions 17, 18, 38, 39, and 78 each coordinate UDP-N-acetyl-alpha-D-muramoyl-L-alanine. 116–122 (GSNAKST) lines the ATP pocket. Positions 119, 120, 121, and 122 each coordinate ADP. UDP-N-acetyl-alpha-D-muramoyl-L-alanine-binding residues include Asn143 and His188. Positions 278, 309, 324, and 326 each coordinate ADP.

This sequence belongs to the MurCDEF family.

The protein resides in the cytoplasm. The enzyme catalyses UDP-N-acetyl-alpha-D-muramoyl-L-alanine + D-glutamate + ATP = UDP-N-acetyl-alpha-D-muramoyl-L-alanyl-D-glutamate + ADP + phosphate + H(+). Its pathway is cell wall biogenesis; peptidoglycan biosynthesis. In terms of biological role, involved in cell wall formation. Catalyzes the addition of D-glutamate to the peptidoglycan precursor UDP-N-acetylmuramoyl-L-alanine (UMA). This is UDP-N-acetylmuramoylalanine--D-glutamate ligase from Pseudomonas aeruginosa (strain ATCC 15692 / DSM 22644 / CIP 104116 / JCM 14847 / LMG 12228 / 1C / PRS 101 / PAO1).